The sequence spans 94 residues: Large ribosomal subunit protein eL43B (94 aa).

The C4-type zinc finger occupies 39-62 (CPFCGRLTVKRTAAGIWKCSGKGC).

Belongs to the eukaryotic ribosomal protein eL43 family. As to quaternary structure, component of the large ribosomal subunit (LSU). Mature yeast ribosomes consist of a small (40S) and a large (60S) subunit. The 40S small subunit contains 1 molecule of ribosomal RNA (18S rRNA) and at least 33 different proteins. The large 60S subunit contains 3 rRNA molecules (25S, 5.8S and 5S rRNA) and at least 46 different proteins.

The protein localises to the cytoplasm. Functionally, component of the ribosome, a large ribonucleoprotein complex responsible for the synthesis of proteins in the cell. The small ribosomal subunit (SSU) binds messenger RNAs (mRNAs) and translates the encoded message by selecting cognate aminoacyl-transfer RNA (tRNA) molecules. The large subunit (LSU) contains the ribosomal catalytic site termed the peptidyl transferase center (PTC), which catalyzes the formation of peptide bonds, thereby polymerizing the amino acids delivered by tRNAs into a polypeptide chain. The nascent polypeptides leave the ribosome through a tunnel in the LSU and interact with protein factors that function in enzymatic processing, targeting, and the membrane insertion of nascent chains at the exit of the ribosomal tunnel. The polypeptide is Large ribosomal subunit protein eL43B (rpl4302) (Schizosaccharomyces pombe (strain 972 / ATCC 24843) (Fission yeast)).